The following is a 207-amino-acid chain: NADH-quinone oxidoreductase subunit A (207 aa).

3 helical membrane-spanning segments follow: residues 6–26 (LSAI…LVVP), 62–82 (LVAI…AYAV), and 87–107 (AGWL…IGLV).

Belongs to the complex I subunit 3 family. As to quaternary structure, NDH-1 is composed of 14 different subunits. Subunits NuoA, H, J, K, L, M, N constitute the membrane sector of the complex.

The protein localises to the cell inner membrane. The enzyme catalyses a quinone + NADH + 5 H(+)(in) = a quinol + NAD(+) + 4 H(+)(out). In terms of biological role, NDH-1 shuttles electrons from NADH, via FMN and iron-sulfur (Fe-S) centers, to quinones in the respiratory chain. The immediate electron acceptor for the enzyme in this species is believed to be ubiquinone. Couples the redox reaction to proton translocation (for every two electrons transferred, four hydrogen ions are translocated across the cytoplasmic membrane), and thus conserves the redox energy in a proton gradient. The sequence is that of NADH-quinone oxidoreductase subunit A from Psychrobacter cryohalolentis (strain ATCC BAA-1226 / DSM 17306 / VKM B-2378 / K5).